Here is a 247-residue protein sequence, read N- to C-terminus: Transmembrane protein 33 (247 aa).

Residue A2 is modified to N-acetylalanine. The Lumenal portion of the chain corresponds to 2-31; that stretch reads ADTTPNGPQGAGAVQFMMTNKLDTAMWLSR. The helical transmembrane segment at 32–52 threads the bilayer; that stretch reads LFTVYCSALFVLPLLGLHEAA. Over 53–100 the chain is Cytoplasmic; it reads SFYQRALLANALTSALRLHQRLPHFQLSRAFLAQALLEDSCHYLLYSL. A helical transmembrane segment spans residues 101 to 121; sequence IFVNSYPVTMSIFPVLLFSLL. The Lumenal portion of the chain corresponds to 122-155; sequence HAATYTKKVLDAKGSNSLPLLRSFLDKLSTNQQN. A helical membrane pass occupies residues 156–176; it reads ILKFIACNEIFLMPATVFMLF. Residues 177-247 are Cytoplasmic-facing; the sequence is SGQGSLLQPF…FISRLAPTVA (71 aa).

Belongs to the PER33/POM33 family. As to quaternary structure, interacts with EIF2AK3. Interacts with RTN1, RTN2, RTN3, RTN4 and ARL6IP1. Interacts with RNF5. Interacts with RNF26. Interacts with PKD2.

The protein resides in the endoplasmic reticulum membrane. It localises to the melanosome. It is found in the nucleus envelope. Functionally, acts as a regulator of the tubular endoplasmic reticulum (ER) network by modulating intracellular calcium homeostasis. Mechanistically, stimulates PKD2 calcium-dependent activity. Suppresses the RTN3/4-induced formation of the ER tubules. Positively regulates PERK-mediated and IRE1-mediated unfolded protein response signaling. Plays an essential role in VEGF-mediated release of Ca(2+) from ER stores during angiogenesis. Also plays a role in the modulation of innate immune signaling through the cGAS-STING pathway by interacting with RNF26. Participates in lipid metabolism by acting as a downstream effector of the pyruvate kinase/PKM. Forms a complex with RNF5 to facilitate polyubiquitination and subsequent degradation of SCAP on the ER membrane. This Mus musculus (Mouse) protein is Transmembrane protein 33 (Tmem33).